Reading from the N-terminus, the 335-residue chain is D-arabinose 1-dehydrogenase (335 aa).

The Proton donor role is filled by Tyr58. Position 124 (His124) interacts with substrate. Residue 221-287 (SLLRSQETRQ…VSSMEELKLA (67 aa)) participates in NAD(+) binding.

This sequence belongs to the aldo/keto reductase family. Aldo/keto reductase 2 subfamily.

It carries out the reaction D-arabinose + NAD(+) = D-arabinono-1,4-lactone + NADH + H(+). This chain is D-arabinose 1-dehydrogenase (ARA2), found in Saccharomyces cerevisiae (strain ATCC 204508 / S288c) (Baker's yeast).